The following is an 877-amino-acid chain: Clumping factor B (877 aa).

Residues 1–44 (MKKRIDYLSNKQNKYSIRRFTVGTTSVIVGATILFGIGNHQAQA) form the signal peptide. A YSIRK-G/S signaling motif motif is present at residues 15 to 26 (YSIRRFTVGTTS). Polar residues-rich tracts occupy residues 44 to 61 (ASEQ…NASA) and 68 to 95 (MIET…NVDS). A disordered region spans residues 44 to 192 (ASEQSNDTTQ…QGTSKPSVRT (149 aa)). A ligand binding A region region spans residues 45–542 (SEQSNDTTQS…GSADGDSAVN (498 aa)). The segment covering 96 to 119 (TTKPMSTQTSNTTTTEPASTNETP) has biased composition (low complexity). Positions 120-189 (QPTAIKNQAT…SNAQGTSKPS (70 aa)) are enriched in polar residues. The MIDAS-like motif motif lies at 272–276 (DYSNS). The segment at 530–849 (YGGGSADGDS…ETGDKSENTN (320 aa)) is disordered. Positions 545-555 (DPTPGPPVDPE) are enriched in pro residues. Residues 556–801 (PSPDPEPEPT…SDSDSDSDSD (246 aa)) are compositionally biased toward acidic residues. The segment covering 805–816 (RVTPPNNEQKAP) has biased composition (polar residues). Positions 833-846 (HKTDALPETGDKSE) are enriched in basic and acidic residues. An LPXTG sorting signal motif is present at residues 838-842 (LPETG). Thr841 carries the post-translational modification Pentaglycyl murein peptidoglycan amidated threonine. The propeptide at 842-877 (GDKSENTNATLFGAMMALLGSLLLFRKRKQDHKEKA) is removed by sortase.

Belongs to the serine-aspartate repeat-containing protein (SDr) family. Post-translationally, proteolytically cleaved by aureolysin (aur). This cleavage leads to the inactivation of ClfB.

It is found in the secreted. It localises to the cell wall. Functionally, cell surface-associated protein implicated in virulence by promoting bacterial attachment to both alpha- and beta-chains of human fibrinogen and inducing the formation of bacterial clumps. The protein is Clumping factor B (clfB) of Staphylococcus aureus (strain Mu50 / ATCC 700699).